Consider the following 262-residue polypeptide: Transmembrane protein 106A (262 aa).

Residues 95 to 115 (FVFLAVLICLVTSSFIVFFLF) form a helical membrane-spanning segment.

It belongs to the TMEM106 family. In terms of tissue distribution, expressed in renal cells (at protein level). Expressed in epithelial cells.

Its subcellular location is the cell membrane. Its function is as follows. Activates macrophages and polarizes them into M1-like macrophages through the activation of the MAPK and NF-kappaB signaling pathway. Upon activation, up-regulates the expression of CD80, CD86, CD69 and MHC II on macrophages, and induces the release of pro-inflammatory cytokines such as TNF, IL1B, IL6, CCL2 and nitric oxide. May play a role in inhibition of proliferation and migration. The polypeptide is Transmembrane protein 106A (TMEM106A) (Homo sapiens (Human)).